The primary structure comprises 302 residues: CASP-like protein 4A2 (302 aa).

The segment covering 1–13 (MALQAQQQATPSP) has biased composition (polar residues). The tract at residues 1–134 (MALQAQQQAT…APPPHAQVRS (134 aa)) is disordered. The Cytoplasmic segment spans residues 1–154 (MALQAQQQAT…RKRRAAVMQR (154 aa)). The span at 40–60 (VVVASTHHAAAAARYVPPRAT) shows a compositional bias: low complexity. Pro residues predominate over residues 99 to 129 (KTPPPAPPLPAAPPPPPAASPAPAPRAPPPH). The chain crosses the membrane as a helical span at residues 155 to 175 (AALLARAAAAGLCLAALAVLA). Residues 176–197 (SDTRRGWARDSYSNYAQFRYSE) lie on the Extracellular side of the membrane. Residues 198–218 (AVNVVGFLYSVFQFVALAELM) traverse the membrane as a helical segment. Over 219–238 (RRNKHLIPHPKRDLFDFTMD) the chain is Cytoplasmic. Residues 239–256 (QVVAYLLISSSSSATARA) traverse the membrane as a helical segment. The Extracellular portion of the chain corresponds to 257-273 (SDLIENWGSDSFPSMAN). A helical transmembrane segment spans residues 274 to 294 (GSIAISFVAFVVFAICSLISA). Over 295-302 (YNLFRRDM) the chain is Cytoplasmic.

The protein belongs to the Casparian strip membrane proteins (CASP) family. Homodimer and heterodimers.

It localises to the cell membrane. The sequence is that of CASP-like protein 4A2 from Zea mays (Maize).